The chain runs to 458 residues: UDP-N-acetylmuramate--L-alanine ligase (458 aa).

ATP is bound at residue 112 to 118; that stretch reads GTHGKTT.

The protein belongs to the MurCDEF family.

It localises to the cytoplasm. It carries out the reaction UDP-N-acetyl-alpha-D-muramate + L-alanine + ATP = UDP-N-acetyl-alpha-D-muramoyl-L-alanine + ADP + phosphate + H(+). It functions in the pathway cell wall biogenesis; peptidoglycan biosynthesis. In terms of biological role, cell wall formation. This chain is UDP-N-acetylmuramate--L-alanine ligase, found in Geotalea daltonii (strain DSM 22248 / JCM 15807 / FRC-32) (Geobacter daltonii).